Consider the following 470-residue polypeptide: Uronate isomerase (470 aa).

Belongs to the metallo-dependent hydrolases superfamily. Uronate isomerase family.

It carries out the reaction D-glucuronate = D-fructuronate. The enzyme catalyses aldehydo-D-galacturonate = keto-D-tagaturonate. The protein operates within carbohydrate metabolism; pentose and glucuronate interconversion. This is Uronate isomerase from Escherichia coli O17:K52:H18 (strain UMN026 / ExPEC).